The sequence spans 850 residues: Rho guanine nucleotide exchange factor 33 (850 aa).

Basic and acidic residues-rich tracts occupy residues 1-13 and 98-113; these read MEKSKAKQGENEH and EEMQQKIEQLQQEKRR. Disordered stretches follow at residues 1–21 and 98–209; these read MEKSKAKQGENEHMPVNNPST and EEMQ…DENL. The stretch at 54 to 128 forms a coiled coil; sequence LEEKVKSCRC…KAKKAQKEEH (75 aa). Residues 130-149 show a composition bias toward low complexity; sequence AQAGPASAPAPGSAPTQGSP. The segment covering 164–175 has biased composition (polar residues); that stretch reads DFTNMLPSQNYE. The region spanning 273–448 is the DH domain; that stretch reads KRQTVALELL…RVFISHYTLL (176 aa). Disordered regions lie at residues 504–550 and 702–850; these read EMLQ…WELE and AAQA…WGWW. 2 stretches are compositionally biased toward low complexity: residues 510–520 and 754–770; these read PSSSSSAPAVS and APHGPAAAAAASRGAPR. Arg766 is subject to Omega-N-methylarginine. Over residues 773 to 783 the composition is skewed to polar residues; it reads FPQQRSQSEKQ. A compositionally biased stretch (basic and acidic residues) spans 784 to 806; that stretch reads TYLEEMHLEDATRFCPKEERESE. The span at 826 to 835 shows a compositional bias: basic residues; sequence SFRKLFKKKN.

The polypeptide is Rho guanine nucleotide exchange factor 33 (Arhgef33) (Mus musculus (Mouse)).